Consider the following 863-residue polypeptide: Glycogen phosphorylase (863 aa).

Lysine 618 is modified (N6-(pyridoxal phosphate)lysine).

The protein belongs to the glycogen phosphorylase family. Pyridoxal 5'-phosphate serves as cofactor.

The catalysed reaction is [(1-&gt;4)-alpha-D-glucosyl](n) + phosphate = [(1-&gt;4)-alpha-D-glucosyl](n-1) + alpha-D-glucose 1-phosphate. In terms of biological role, phosphorylase is an important allosteric enzyme in carbohydrate metabolism. Enzymes from different sources differ in their regulatory mechanisms and in their natural substrates. However, all known phosphorylases share catalytic and structural properties. This chain is Glycogen phosphorylase (glgP), found in Mycobacterium tuberculosis (strain CDC 1551 / Oshkosh).